A 566-amino-acid polypeptide reads, in one-letter code: Urease subunit alpha (566 aa).

One can recognise a Urease domain in the interval 128–566 (GGIDTHIHFI…LPMAQRYFLF (439 aa)). Ni(2+) is bound by residues H133, H135, and K216. K216 is modified (N6-carboxylysine). H218 is a substrate binding site. Ni(2+) contacts are provided by H245 and H271. Residue H319 is the Proton donor of the active site. D359 serves as a coordination point for Ni(2+).

The protein belongs to the metallo-dependent hydrolases superfamily. Urease alpha subunit family. In terms of assembly, heterotrimer of UreA (gamma), UreB (beta) and UreC (alpha) subunits. Three heterotrimers associate to form the active enzyme. Requires Ni cation as cofactor. Carboxylation allows a single lysine to coordinate two nickel ions.

It localises to the cytoplasm. The enzyme catalyses urea + 2 H2O + H(+) = hydrogencarbonate + 2 NH4(+). Its pathway is nitrogen metabolism; urea degradation; CO(2) and NH(3) from urea (urease route): step 1/1. The polypeptide is Urease subunit alpha (Pseudomonas fluorescens (strain Pf0-1)).